We begin with the raw amino-acid sequence, 502 residues long: Probable cytochrome P450 554A1 (502 aa).

The helical transmembrane segment at 3–20 (LLLFIFFLILFYYSVKYY) threads the bilayer. Cys-448 lines the heme pocket.

It belongs to the cytochrome P450 family. Heme is required as a cofactor.

It is found in the membrane. The polypeptide is Probable cytochrome P450 554A1 (cyp554A1) (Dictyostelium discoideum (Social amoeba)).